A 411-amino-acid polypeptide reads, in one-letter code: Serine hydroxymethyltransferase (411 aa).

120-122 (GHL) contacts (6S)-5,6,7,8-tetrahydrofolate. Lysine 225 bears the N6-(pyridoxal phosphate)lysine mark. 350-352 (SPF) lines the (6S)-5,6,7,8-tetrahydrofolate pocket.

The protein belongs to the SHMT family. Homodimer. The cofactor is pyridoxal 5'-phosphate.

The protein resides in the cytoplasm. The enzyme catalyses (6R)-5,10-methylene-5,6,7,8-tetrahydrofolate + glycine + H2O = (6S)-5,6,7,8-tetrahydrofolate + L-serine. Its pathway is one-carbon metabolism; tetrahydrofolate interconversion. The protein operates within amino-acid biosynthesis; glycine biosynthesis; glycine from L-serine: step 1/1. Functionally, catalyzes the reversible interconversion of serine and glycine with tetrahydrofolate (THF) serving as the one-carbon carrier. This reaction serves as the major source of one-carbon groups required for the biosynthesis of purines, thymidylate, methionine, and other important biomolecules. Also exhibits THF-independent aldolase activity toward beta-hydroxyamino acids, producing glycine and aldehydes, via a retro-aldol mechanism. This Lactobacillus acidophilus (strain ATCC 700396 / NCK56 / N2 / NCFM) protein is Serine hydroxymethyltransferase.